We begin with the raw amino-acid sequence, 282 residues long: Pantothenate synthetase (282 aa).

ATP is bound at residue 30–37 (MGFLHDGH). Residue histidine 37 is the Proton donor of the active site. Glutamine 60 is a (R)-pantoate binding site. Glutamine 60 contributes to the beta-alanine binding site. ATP is bound at residue 146–149 (GQKD). Position 152 (glutamine 152) interacts with (R)-pantoate. Residues isoleucine 175 and 183 to 186 (KSSR) each bind ATP.

Belongs to the pantothenate synthetase family. As to quaternary structure, homodimer.

It is found in the cytoplasm. The catalysed reaction is (R)-pantoate + beta-alanine + ATP = (R)-pantothenate + AMP + diphosphate + H(+). It functions in the pathway cofactor biosynthesis; (R)-pantothenate biosynthesis; (R)-pantothenate from (R)-pantoate and beta-alanine: step 1/1. In terms of biological role, catalyzes the condensation of pantoate with beta-alanine in an ATP-dependent reaction via a pantoyl-adenylate intermediate. This Campylobacter jejuni (strain RM1221) protein is Pantothenate synthetase.